A 102-amino-acid polypeptide reads, in one-letter code: Phosphoribosyl-ATP pyrophosphatase (102 aa).

The protein belongs to the PRA-PH family.

The protein resides in the cytoplasm. The catalysed reaction is 1-(5-phospho-beta-D-ribosyl)-ATP + H2O = 1-(5-phospho-beta-D-ribosyl)-5'-AMP + diphosphate + H(+). It participates in amino-acid biosynthesis; L-histidine biosynthesis; L-histidine from 5-phospho-alpha-D-ribose 1-diphosphate: step 2/9. This chain is Phosphoribosyl-ATP pyrophosphatase, found in Ignicoccus hospitalis (strain KIN4/I / DSM 18386 / JCM 14125).